The sequence spans 259 residues: Snake venom serine protease homolog rhinocerase 3 (259 aa).

A signal peptide spans 1 to 17 (VLIRVLANLLLLQLSYA). Positions 18 to 23 (QESSEL) are excised as a propeptide. In terms of domain architecture, Peptidase S1 spans 24–250 (VIGGDECDIN…YTDWIEGIIA (227 aa)). 6 disulfide bridges follow: Cys30–Cys164, Cys51–Cys67, Cys99–Cys257, Cys143–Cys211, Cys175–Cys190, and Cys201–Cys226. Residue Asn80 is glycosylated (N-linked (GlcNAc...) asparagine). Asn252 carries N-linked (GlcNAc...) asparagine glycosylation.

The protein belongs to the peptidase S1 family. Snake venom subfamily. In terms of tissue distribution, expressed by the venom gland.

The protein localises to the secreted. Functionally, snake venom serine protease homolog that may act in the hemostasis system of the prey. This Bitis rhinoceros (West African gaboon viper) protein is Snake venom serine protease homolog rhinocerase 3.